The primary structure comprises 409 residues: Tyrosine--tRNA ligase (409 aa).

The short motif at 54–63 (PTAPDIHLGH) is the 'HIGH' region element. A 'KMSKS' region motif is present at residues 238–242 (KMSKS). Lysine 241 is an ATP binding site. In terms of domain architecture, S4 RNA-binding spans 347 to 407 (QGILRILREA…GKRKFARVKL (61 aa)).

It belongs to the class-I aminoacyl-tRNA synthetase family. TyrS type 2 subfamily. As to quaternary structure, homodimer.

It is found in the cytoplasm. It catalyses the reaction tRNA(Tyr) + L-tyrosine + ATP = L-tyrosyl-tRNA(Tyr) + AMP + diphosphate + H(+). Its function is as follows. Catalyzes the attachment of tyrosine to tRNA(Tyr) in a two-step reaction: tyrosine is first activated by ATP to form Tyr-AMP and then transferred to the acceptor end of tRNA(Tyr). The protein is Tyrosine--tRNA ligase of Bordetella pertussis (strain Tohama I / ATCC BAA-589 / NCTC 13251).